Consider the following 147-residue polypeptide: Acidic phospholipase A2 beta-bungarotoxin A4 chain (147 aa).

An N-terminal signal peptide occupies residues 1–19; the sequence is MNPAHLLVLSAVCVSLLGA. Positions 20 to 27 are excised as a propeptide; it reads ANIPPQHL. 6 disulfide bridges follow: C54–C146, C56–C72, C71–C127, C78–C120, C88–C113, and C106–C118. Ca(2+)-binding residues include Y55, G57, and G59. H75 is an active-site residue. Position 76 (D76) interacts with Ca(2+). Residue D121 is part of the active site.

It belongs to the phospholipase A2 family. Group I subfamily. D49 sub-subfamily. Heterodimer; disulfide-linked. The A chains have phospholipase A2 activity and the B chains show homology with the basic protease inhibitors. The cofactor is Ca(2+). In terms of tissue distribution, expressed by the venom gland.

Its subcellular location is the secreted. It carries out the reaction a 1,2-diacyl-sn-glycero-3-phosphocholine + H2O = a 1-acyl-sn-glycero-3-phosphocholine + a fatty acid + H(+). Functionally, snake venom phospholipase A2 (PLA2) that inhibits neuromuscular transmission by blocking acetylcholine release from the nerve termini. PLA2 catalyzes the calcium-dependent hydrolysis of the 2-acyl groups in 3-sn-phosphoglycerides. The chain is Acidic phospholipase A2 beta-bungarotoxin A4 chain from Bungarus multicinctus (Many-banded krait).